The following is a 321-amino-acid chain: L-lactate dehydrogenase (321 aa).

NAD(+) is bound by residues Val-19, Asp-40, Lys-45, Tyr-71, and 85–86; that span reads GA. Substrate-binding positions include Gln-88, Arg-94, and 126–129; that span reads NPVD. Residues 124–126 and Ser-149 each bind NAD(+); that span reads ATN. 154–157 contacts substrate; the sequence is DTAR. 2 residues coordinate beta-D-fructose 1,6-bisphosphate: Arg-159 and His-174. The Proton acceptor role is filled by His-181. Tyr-226 bears the Phosphotyrosine mark. Thr-235 is a binding site for substrate.

The protein belongs to the LDH/MDH superfamily. LDH family. Homotetramer.

Its subcellular location is the cytoplasm. It catalyses the reaction (S)-lactate + NAD(+) = pyruvate + NADH + H(+). Its pathway is fermentation; pyruvate fermentation to lactate; (S)-lactate from pyruvate: step 1/1. Allosterically activated by fructose 1,6-bisphosphate (FBP). Catalyzes the conversion of lactate to pyruvate. The protein is L-lactate dehydrogenase of Oceanobacillus iheyensis (strain DSM 14371 / CIP 107618 / JCM 11309 / KCTC 3954 / HTE831).